The chain runs to 178 residues: MKRALFPGRFQPPHWGHVYAVREILKEVDEVIITVGSAQFNYILKDPFTAGERIWMLREALREGGIDLSRVVIIPVPNVENNLEWLGRVKSLAPPFQIVYTGNPFVALLFKEAGYEVRQQPMFRREQLSSTRVRELILKGDPQWEELVPKSVAAIIKAIGGAERLRIAALGEAEPHKW.

It belongs to the archaeal NMN adenylyltransferase family.

It is found in the cytoplasm. The catalysed reaction is beta-nicotinamide D-ribonucleotide + ATP + H(+) = diphosphate + NAD(+). It participates in cofactor biosynthesis; NAD(+) biosynthesis; NAD(+) from nicotinamide D-ribonucleotide: step 1/1. This is Nicotinamide-nucleotide adenylyltransferase from Pyrobaculum aerophilum (strain ATCC 51768 / DSM 7523 / JCM 9630 / CIP 104966 / NBRC 100827 / IM2).